A 366-amino-acid chain; its full sequence is Mitochondrial division protein fszB (366 aa).

Residues 70–74, 157–159, Glu190, and Asp238 contribute to the GTP site; these read GGGGN and GTG.

Belongs to the FtsZ family.

It is found in the mitochondrion. Functionally, probably involved in mitochondrion division process. Binds to and hydrolyzes GTP. This chain is Mitochondrial division protein fszB (fszB), found in Dictyostelium discoideum (Social amoeba).